Reading from the N-terminus, the 637-residue chain is ATP-dependent zinc metalloprotease FtsH (637 aa).

Topologically, residues 1–7 (MNRVFRN) are cytoplasmic. A helical transmembrane segment spans residues 8 to 28 (TIFYLLILLVVIGVVSYFQTS). Residues 29-109 (NPKTENMSYS…VEPAQETSGW (81 aa)) are Extracellular-facing. The helical transmembrane segment at 110–130 (VTFLTTIIPFVIIFILFFFLL) threads the bilayer. Over 131-637 (NQAQGGGSRV…TEEKKDDTKE (507 aa)) the chain is Cytoplasmic. 201–208 (GPPGTGKT) provides a ligand contact to ATP. Zn(2+) is bound at residue His-423. Residue Glu-424 is part of the active site. Residues His-427 and Asp-499 each coordinate Zn(2+). Positions 514–637 (FGMSEKLGPL…TEEKKDDTKE (124 aa)) are not necessary for FtsH function.

In the central section; belongs to the AAA ATPase family. It in the C-terminal section; belongs to the peptidase M41 family. Homohexamer. Interacts with FloT at midcell. Interacts with FloA at midcell. Another study shows only minor colocalization with FloA or FloT. Zn(2+) is required as a cofactor.

It is found in the cell membrane. It localises to the membrane raft. Acts as a processive, ATP-dependent zinc metallopeptidase for both cytoplasmic and membrane proteins. Plays a role in the quality control of integral membrane proteins. In terms of biological role, in vitro partially degrades Spo0E, the phosphatase that acts on Spo0A-P. Recognition requires the last 14 residues of Spo0E. Its stabile accumulation requires FlotA and Flot. May degrade EzrA. This is ATP-dependent zinc metalloprotease FtsH from Bacillus subtilis (strain 168).